The sequence spans 320 residues: Zinc finger Ran-binding domain-containing protein 2 (320 aa).

At S9 the chain carries Phosphoserine. A RanBP2-type 1 zinc finger spans residues 9-40; sequence SDGDWICPDKKCGNVNFARRTSCNRCGREKTT. N6-acetyllysine is present on residues K18, K54, and K92. A RanBP2-type 2 zinc finger spans residues 65-94; the sequence is SANDWQCKTCSNVNWARRSECNMCNTPKYA. The segment at 117 to 320 is disordered; that stretch reads REESDGEYDE…QVIGENTKQP (204 aa). Phosphoserine occurs at positions 120, 153, 181, 188, and 193. Residues 150–163 are compositionally biased toward acidic residues; that stretch reads DKESEGEEEDEDED. The required for nuclear targeting stretch occupies residues 151–320; sequence KESEGEEEDE…QVIGENTKQP (170 aa). Residues 196 to 210 are compositionally biased toward basic residues; that stretch reads KKSNRRSRSKSRSSH. Composition is skewed to low complexity over residues 211–224 and 232–242; these read SRSSSRSSSPSSSR and RSSSSSQSRSR. Residues 251–273 show a composition bias toward basic residues; sequence SRGSKSRSSSRSHRGSSSPRKRS.

The protein belongs to the ZRANB2 family. Interacts with the C-terminal half of SNRP70/U1-70K, the Arg/Ser-rich domain of AKAP17A as well as with U2AF1 and CLK1. In terms of processing, phosphorylated on Ser-310 upon DNA damage, probably by ATM or ATR.

The protein resides in the nucleus. Its function is as follows. Splice factor required for alternative splicing of TRA2B/SFRS10 transcripts. Binds to ssRNA containing the consensus sequence 5'-AGGUAA-3'. May interfere with constitutive 5'-splice site selection. The sequence is that of Zinc finger Ran-binding domain-containing protein 2 from Pongo abelii (Sumatran orangutan).